The sequence spans 291 residues: Urease accessory protein UreD (291 aa).

The protein belongs to the UreD family. As to quaternary structure, ureD, UreF and UreG form a complex that acts as a GTP-hydrolysis-dependent molecular chaperone, activating the urease apoprotein by helping to assemble the nickel containing metallocenter of UreC. The UreE protein probably delivers the nickel.

It localises to the cytoplasm. Its function is as follows. Required for maturation of urease via the functional incorporation of the urease nickel metallocenter. The protein is Urease accessory protein UreD of Acinetobacter baumannii (strain ATCC 17978 / DSM 105126 / CIP 53.77 / LMG 1025 / NCDC KC755 / 5377).